Consider the following 419-residue polypeptide: L-rhamnose isomerase (419 aa).

The Mn(2+) site is built by H262, D294, and D296.

This sequence belongs to the rhamnose isomerase family. As to quaternary structure, homotetramer. The cofactor is Mn(2+).

The protein localises to the cytoplasm. It carries out the reaction L-rhamnopyranose = L-rhamnulose. It participates in carbohydrate degradation; L-rhamnose degradation; glycerone phosphate from L-rhamnose: step 1/3. Functionally, catalyzes the interconversion of L-rhamnose and L-rhamnulose. The sequence is that of L-rhamnose isomerase from Salmonella agona (strain SL483).